The chain runs to 496 residues: Tripartite motif-containing protein 30A (496 aa).

The segment at 15-59 (CPICLELLKEPVSADCNHSFCRACITLNYESNRNTDGKGNCPVCR) adopts an RING-type zinc-finger fold. Residues 91-132 (QKVNICAQHGEKLRLFCRKDMMVICWLCERSQEHRGHQTALI) form a B box-type zinc finger. Positions 96, 99, 118, and 124 each coordinate Zn(2+). Positions 173–239 (NQIQINVENV…RDLISDVEHH (67 aa)) form a coiled coil. The interval 205–210 (KKEKKE) is highly hydrophilic. Positions 268–276 (TVPQKRKRT) match the Nuclear localization signal motif. The region spanning 281–496 (DLKGMLQVYQ…EPMTICGPPS (216 aa)) is the B30.2/SPRY domain.

As to quaternary structure, homomultimer. Interacts with NR2C2/TAK1, TAB2 and TAB3. Does not interact with NLRP3, NLRC4 or TAB1. As to expression, highly expressed in spleen and lymph nodes (at protein level).

It localises to the cytoplasm. It is found in the nucleus. Functionally, trans-acting factor that regulates gene expression of interleukin 2 receptor alpha chain. May affect IL2R-alpha expression through cis-acting negative regulatory elements or through competition with proteins that bind to enhancer or activator sequences. Negatively regulates Toll-like receptor (TLR)-mediated activation of NFKB by promoting degradation of TAB2 and TAB3 and preventing TRAF6 autoubiquitination. Negatively regulates production of reactive oxygen species (ROS) which inhibits activation of the NLRP3 inflammasome complex. This, in turn, regulates activation of CASP1 and subsequent cleavage of IL1B and IL18. No activity detected against a range of retroviruses including a number of lentiviruses, gammaretroviruses and betaretroviruses. This is Tripartite motif-containing protein 30A (Trim30a) from Mus musculus (Mouse).